The chain runs to 415 residues: Multidrug resistance protein MdtA (415 aa).

The first 21 residues, 1 to 21 (MKGSYKSRWVIVIVVVIAAIA), serve as a signal peptide directing secretion. The span at 31–47 (DSQSAAPGATKQAQQSP) shows a compositional bias: polar residues. Disordered regions lie at residues 31–60 (DSQS…GPLA) and 392–415 (EAQS…GARS). Residues 399–415 (PEEKATSREYAKKGARS) show a composition bias toward basic and acidic residues.

It belongs to the membrane fusion protein (MFP) (TC 8.A.1) family. In terms of assembly, part of a tripartite efflux system composed of MdtA, MdtB and MdtC.

It is found in the cell inner membrane. In terms of biological role, the MdtABC tripartite complex confers resistance against novobiocin and deoxycholate. The protein is Multidrug resistance protein MdtA of Escherichia coli O8 (strain IAI1).